A 343-amino-acid polypeptide reads, in one-letter code: L-threonine 3-dehydrogenase (343 aa).

Residue cysteine 40 participates in Zn(2+) binding. Catalysis depends on charge relay system residues threonine 42 and histidine 45. The Zn(2+) site is built by histidine 65, glutamate 66, cysteine 95, cysteine 98, cysteine 101, and cysteine 109. NAD(+) is bound by residues isoleucine 177, aspartate 197, arginine 202, 264–266, and 288–289; these read LGI and IY.

This sequence belongs to the zinc-containing alcohol dehydrogenase family. Homotetramer. Requires Zn(2+) as cofactor.

The protein resides in the cytoplasm. It carries out the reaction L-threonine + NAD(+) = (2S)-2-amino-3-oxobutanoate + NADH + H(+). It functions in the pathway amino-acid degradation; L-threonine degradation via oxydo-reductase pathway; glycine from L-threonine: step 1/2. In terms of biological role, catalyzes the NAD(+)-dependent oxidation of L-threonine to 2-amino-3-ketobutyrate. In Vibrio vulnificus (strain YJ016), this protein is L-threonine 3-dehydrogenase.